Consider the following 531-residue polypeptide: Tryptophan biosynthesis protein TRP1 (531 aa).

The tract at residues 1-254 (MGNILEEIAA…TVKDLLQNVT (254 aa)) is indole-3-glycerol phosphate synthase. The segment at 255 to 531 (RHSESGEFAL…TLKIDEETEN (277 aa)) is N-(5'-phosphoribosyl)anthranilate isomerase.

In the N-terminal section; belongs to the TrpC family. This sequence in the C-terminal section; belongs to the TrpF family.

The enzyme catalyses N-(5-phospho-beta-D-ribosyl)anthranilate = 1-(2-carboxyphenylamino)-1-deoxy-D-ribulose 5-phosphate. It carries out the reaction 1-(2-carboxyphenylamino)-1-deoxy-D-ribulose 5-phosphate + H(+) = (1S,2R)-1-C-(indol-3-yl)glycerol 3-phosphate + CO2 + H2O. Its pathway is amino-acid biosynthesis; L-tryptophan biosynthesis; L-tryptophan from chorismate: step 3/5. The protein operates within amino-acid biosynthesis; L-tryptophan biosynthesis; L-tryptophan from chorismate: step 4/5. In terms of biological role, bifunctional enzyme that catalyzes two sequential steps of tryptophan biosynthetic pathway. This chain is Tryptophan biosynthesis protein TRP1 (TRP1), found in Phytophthora nicotianae (Potato buckeye rot agent).